Consider the following 863-residue polypeptide: Oleate activated transcription factor 3 (863 aa).

A DNA-binding region (zn(2)-C6 fungal-type) is located at residues 18–47; sequence VCTNCKKRKSKCDRTKPCGTCVRLGDVDSC. Over residues 52–63 the composition is skewed to polar residues; that stretch reads DSSGQPESSPSL. The interval 52–99 is disordered; it reads DSSGQPESSPSLNDADPLRKQSTPAERISPGFIKKRRSSQTRQDEDHW.

It belongs to the OAF3 family.

The protein localises to the cytoplasm. It is found in the nucleus. It localises to the mitochondrion. Its function is as follows. Transcriptional inhibitor with a significantly increased number of target genes in response to oleate. This chain is Oleate activated transcription factor 3 (OAF3), found in Saccharomyces cerevisiae (strain ATCC 204508 / S288c) (Baker's yeast).